The chain runs to 510 residues: Ectonucleoside triphosphate diphosphohydrolase 1 (510 aa).

Residues 1 to 16 (MEDIKDSKVKRFCSKN) are Cytoplasmic-facing. The chain crosses the membrane as a helical span at residues 17–37 (ILIILGFTSILAVIALIAVGL). Residues 38-478 (TQNKPLPENV…SPPLPHSTYI (441 aa)) lie on the Extracellular side of the membrane. N-linked (GlcNAc...) asparagine glycosylation occurs at Asn73. A disulfide bridge connects residues Cys84 and Cys108. Glu174 (proton acceptor) is an active-site residue. N-linked (GlcNAc...) asparagine glycans are attached at residues Asn226, Asn291, and Asn333. Intrachain disulfides connect Cys254–Cys300 and Cys281–Cys324. 2 disulfide bridges follow: Cys337/Cys342 and Cys391/Cys414. N-linked (GlcNAc...) asparagine glycosylation is found at Asn428 and Asn457. A helical transmembrane segment spans residues 479–499 (GLMVLFSLLLVAVAITGLFIY). Topologically, residues 500–510 (SKPSYFWKEAV) are cytoplasmic.

The protein belongs to the GDA1/CD39 NTPase family. As to quaternary structure, homodimer; disulfide-linked. Ca(2+) serves as cofactor. The cofactor is Mg(2+). In terms of processing, N-glycosylated. The N-terminus is blocked. Post-translationally, palmitoylated on Cys-13; which is required for caveola targeting.

The protein resides in the membrane. It is found in the caveola. The enzyme catalyses a ribonucleoside 5'-triphosphate + 2 H2O = a ribonucleoside 5'-phosphate + 2 phosphate + 2 H(+). It carries out the reaction a ribonucleoside 5'-triphosphate + H2O = a ribonucleoside 5'-diphosphate + phosphate + H(+). The catalysed reaction is a ribonucleoside 5'-diphosphate + H2O = a ribonucleoside 5'-phosphate + phosphate + H(+). It catalyses the reaction ATP + 2 H2O = AMP + 2 phosphate + 2 H(+). The enzyme catalyses ATP + H2O = ADP + phosphate + H(+). It carries out the reaction ADP + H2O = AMP + phosphate + H(+). The catalysed reaction is CTP + 2 H2O = CMP + 2 phosphate + 2 H(+). It catalyses the reaction CTP + H2O = CDP + phosphate + H(+). The enzyme catalyses CDP + H2O = CMP + phosphate + H(+). It carries out the reaction GTP + 2 H2O = GMP + 2 phosphate + 2 H(+). The catalysed reaction is GTP + H2O = GDP + phosphate + H(+). It catalyses the reaction GDP + H2O = GMP + phosphate + H(+). The enzyme catalyses ITP + 2 H2O = IMP + 2 phosphate + 2 H(+). It carries out the reaction ITP + H2O = IDP + phosphate + H(+). The catalysed reaction is IDP + H2O = IMP + phosphate + H(+). It catalyses the reaction UTP + 2 H2O = UMP + 2 phosphate + 2 H(+). The enzyme catalyses UTP + H2O = UDP + phosphate + H(+). It carries out the reaction UDP + H2O = UMP + phosphate + H(+). Functionally, catalyzes the hydrolysis of both di- and triphosphate nucleotides (NDPs and NTPs) and hydrolyze NTPs to nucleotide monophosphates (NMPs) in two distinct successive phosphate-releasing steps, with NDPs as intermediates and participates in the regulation of extracellular levels of nucleotides. By hydrolyzing proinflammatory ATP and platelet-activating ADP to AMP, it blocks platelet aggregation and supports blood flow. This is Ectonucleoside triphosphate diphosphohydrolase 1 from Mus musculus (Mouse).